The sequence spans 55 residues: Large ribosomal subunit protein bL33A (55 aa).

The protein belongs to the bacterial ribosomal protein bL33 family.

This chain is Large ribosomal subunit protein bL33A, found in Mycobacterium sp. (strain JLS).